Reading from the N-terminus, the 327-residue chain is uncharacterized protein (327 aa).

One can recognise an S4 RNA-binding domain in the interval 32 to 105 (VRLDKWLAEQ…IPLDILYEDE (74 aa)). Asp156 is an active-site residue.

This sequence belongs to the pseudouridine synthase RluA family.

The catalysed reaction is a uridine in RNA = a pseudouridine in RNA. This is an uncharacterized protein from Synechocystis sp. (strain ATCC 27184 / PCC 6803 / Kazusa).